Consider the following 370-residue polypeptide: Anhydro-N-acetylmuramic acid kinase (370 aa).

13–20 (GTSMDGID) provides a ligand contact to ATP.

It belongs to the anhydro-N-acetylmuramic acid kinase family.

The catalysed reaction is 1,6-anhydro-N-acetyl-beta-muramate + ATP + H2O = N-acetyl-D-muramate 6-phosphate + ADP + H(+). The protein operates within amino-sugar metabolism; 1,6-anhydro-N-acetylmuramate degradation. Its pathway is cell wall biogenesis; peptidoglycan recycling. In terms of biological role, catalyzes the specific phosphorylation of 1,6-anhydro-N-acetylmuramic acid (anhMurNAc) with the simultaneous cleavage of the 1,6-anhydro ring, generating MurNAc-6-P. Is required for the utilization of anhMurNAc either imported from the medium or derived from its own cell wall murein, and thus plays a role in cell wall recycling. This Rhizobium etli (strain ATCC 51251 / DSM 11541 / JCM 21823 / NBRC 15573 / CFN 42) protein is Anhydro-N-acetylmuramic acid kinase.